The chain runs to 153 residues: Transcription antitermination protein NusB (153 aa).

Belongs to the NusB family.

Involved in transcription antitermination. Required for transcription of ribosomal RNA (rRNA) genes. Binds specifically to the boxA antiterminator sequence of the ribosomal RNA (rrn) operons. The protein is Transcription antitermination protein NusB of Symbiobacterium thermophilum (strain DSM 24528 / JCM 14929 / IAM 14863 / T).